A 349-amino-acid chain; its full sequence is Hydroxymethylglutaryl-CoA synthase (349 aa).

2 residues coordinate (3S)-3-hydroxy-3-methylglutaryl-CoA: Asp-29 and Ala-30. Glu-81 functions as the Proton donor/acceptor in the catalytic mechanism. 4 residues coordinate (3S)-3-hydroxy-3-methylglutaryl-CoA: Cys-113, Thr-154, Thr-202, and His-235. The active-site Acyl-thioester intermediate is Cys-113. His-235 (proton donor/acceptor) is an active-site residue. Arg-240 contacts CoA. Residues Arg-244, Asn-267, and Ser-297 each contribute to the (3S)-3-hydroxy-3-methylglutaryl-CoA site.

This sequence belongs to the thiolase-like superfamily. Archaeal HMG-CoA synthase family. As to quaternary structure, interacts with acetoacetyl-CoA thiolase that catalyzes the precedent step in the pathway and with a DUF35 protein. The acetoacetyl-CoA thiolase/HMG-CoA synthase complex channels the intermediate via a fused CoA-binding site, which allows for efficient coupling of the endergonic thiolase reaction with the exergonic HMGCS reaction.

It catalyses the reaction acetoacetyl-CoA + acetyl-CoA + H2O = (3S)-3-hydroxy-3-methylglutaryl-CoA + CoA + H(+). The protein operates within metabolic intermediate biosynthesis; (R)-mevalonate biosynthesis; (R)-mevalonate from acetyl-CoA: step 2/3. Functionally, catalyzes the condensation of acetyl-CoA with acetoacetyl-CoA to form 3-hydroxy-3-methylglutaryl-CoA (HMG-CoA). Functions in the mevalonate (MVA) pathway leading to isopentenyl diphosphate (IPP), a key precursor for the biosynthesis of isoprenoid compounds that are building blocks of archaeal membrane lipids. The polypeptide is Hydroxymethylglutaryl-CoA synthase (Caldivirga maquilingensis (strain ATCC 700844 / DSM 13496 / JCM 10307 / IC-167)).